Reading from the N-terminus, the 122-residue chain is Lycotoxin-Pa4a (122 aa).

The first 20 residues, methionine 1 to serine 20, serve as a signal peptide directing secretion. The propeptide occupies glutamate 21–arginine 47. Cystine bridges form between cysteine 58/cysteine 73, cysteine 65/cysteine 82, cysteine 72/cysteine 100, and cysteine 84/cysteine 98.

This sequence belongs to the neurotoxin 19 (CSTX) family. In terms of tissue distribution, expressed by the venom gland.

The protein resides in the secreted. It localises to the target cell membrane. Potent antibacterial peptide with anti-inflammatory properties. Inhibits both Gram-negative and Gram-positive bacteria by disrupting both the outer membrane and the cytosolic membrane of bacteria. Also downregulates the expression of pro-inflammatory mediators (cyclooxygenase-2 (PTGS2/COX2), nitric oxide-induced synthase (NOS2), IL-1 beta (IL1B), TNF-alpha (TNF)) and upregulates the level of anti-inflammatory cytokine (IL10) by inactivating mitogen-activated protein kinase signaling in a lipopolysaccharide-stimulated murine macrophage cell line. This chain is Lycotoxin-Pa4a, found in Pardosa astrigera (Wolf spider).